Reading from the N-terminus, the 536-residue chain is Transcription factor cheR (536 aa).

The segment at residues 19-57 (CDRCHRHKLRCERSSVIVNGGVAVPLGPCKRCLKACIPC) is a DNA-binding region (zn(2)-C6 fungal-type). 2 disordered regions span residues 70-122 (AKTG…LSGT) and 220-243 (ALTD…PREE). The span at 88 to 108 (AASPAKRAPSPARRPTASTPR) shows a compositional bias: low complexity.

The protein resides in the nucleus. In terms of biological role, transcription factor; part of the gene cluster that mediates the biosynthesis of chaetoglobosin A which has a unique inhibitory activity against actin polymerization in mammalian cells. Chaetoglobosin A and its intermediates are involved in the morphological differentiation of C.globosum. Binds directly to asymmetric direct repeats present in the promoters of the chaetoglobosin A cluster genes. The sequence is that of Transcription factor cheR from Chaetomium globosum (strain ATCC 6205 / CBS 148.51 / DSM 1962 / NBRC 6347 / NRRL 1970) (Soil fungus).